A 216-amino-acid chain; its full sequence is ATP phosphoribosyltransferase (216 aa).

It belongs to the ATP phosphoribosyltransferase family. Short subfamily. Heteromultimer composed of HisG and HisZ subunits.

Its subcellular location is the cytoplasm. It carries out the reaction 1-(5-phospho-beta-D-ribosyl)-ATP + diphosphate = 5-phospho-alpha-D-ribose 1-diphosphate + ATP. The protein operates within amino-acid biosynthesis; L-histidine biosynthesis; L-histidine from 5-phospho-alpha-D-ribose 1-diphosphate: step 1/9. Catalyzes the condensation of ATP and 5-phosphoribose 1-diphosphate to form N'-(5'-phosphoribosyl)-ATP (PR-ATP). Has a crucial role in the pathway because the rate of histidine biosynthesis seems to be controlled primarily by regulation of HisG enzymatic activity. In Nitrosomonas eutropha (strain DSM 101675 / C91 / Nm57), this protein is ATP phosphoribosyltransferase.